A 464-amino-acid polypeptide reads, in one-letter code: Citrate synthase 5, mitochondrial (464 aa).

Residues 1 to 25 constitute a mitochondrion transit peptide; the sequence is MVFFRSVSAISRLRSRAVQQSSLSN. Active-site residues include His-300, His-346, and Asp-401.

This sequence belongs to the citrate synthase family.

The protein resides in the mitochondrion matrix. It catalyses the reaction oxaloacetate + acetyl-CoA + H2O = citrate + CoA + H(+). It participates in carbohydrate metabolism; tricarboxylic acid cycle; isocitrate from oxaloacetate: step 1/2. In Arabidopsis thaliana (Mouse-ear cress), this protein is Citrate synthase 5, mitochondrial (CSY5).